Consider the following 100-residue polypeptide: Proline-rich protein 15-like protein (100 aa).

Positions 26–100 are disordered; it reads PDTYTQSEGG…LFDDREGKGQ (75 aa). Residues 53-62 show a composition bias toward basic and acidic residues; it reads RLEKIVDKNT.

The protein belongs to the PRR15 family.

In Bos taurus (Bovine), this protein is Proline-rich protein 15-like protein (PRR15L).